A 104-amino-acid polypeptide reads, in one-letter code: Large ribosomal subunit protein bL21 (104 aa).

The protein belongs to the bacterial ribosomal protein bL21 family. As to quaternary structure, part of the 50S ribosomal subunit. Contacts protein L20.

In terms of biological role, this protein binds to 23S rRNA in the presence of protein L20. This is Large ribosomal subunit protein bL21 from Azobacteroides pseudotrichonymphae genomovar. CFP2.